The sequence spans 339 residues: Holliday junction branch migration complex subunit RuvB (339 aa).

A large ATPase domain (RuvB-L) region spans residues 2–187 (KDVNEEERII…FGIIEHMQYY (186 aa)). Residues Leu-26, Arg-27, Gly-68, Lys-71, Thr-72, Thr-73, 134 to 136 (EDF), Arg-177, Tyr-187, and Arg-224 each bind ATP. Thr-72 contacts Mg(2+). Residues 188–258 (SVEDLEKIIQ…TTKHSLHLLE (71 aa)) form a small ATPAse domain (RuvB-S) region. The tract at residues 261–339 (DEGLDQTDRK…QLGYPPKDEK (79 aa)) is head domain (RuvB-H). Residues Arg-316 and Arg-321 each contribute to the DNA site.

The protein belongs to the RuvB family. Homohexamer. Forms an RuvA(8)-RuvB(12)-Holliday junction (HJ) complex. HJ DNA is sandwiched between 2 RuvA tetramers; dsDNA enters through RuvA and exits via RuvB. An RuvB hexamer assembles on each DNA strand where it exits the tetramer. Each RuvB hexamer is contacted by two RuvA subunits (via domain III) on 2 adjacent RuvB subunits; this complex drives branch migration. In the full resolvosome a probable DNA-RuvA(4)-RuvB(12)-RuvC(2) complex forms which resolves the HJ.

Its subcellular location is the cytoplasm. The catalysed reaction is ATP + H2O = ADP + phosphate + H(+). The RuvA-RuvB-RuvC complex processes Holliday junction (HJ) DNA during genetic recombination and DNA repair, while the RuvA-RuvB complex plays an important role in the rescue of blocked DNA replication forks via replication fork reversal (RFR). RuvA specifically binds to HJ cruciform DNA, conferring on it an open structure. The RuvB hexamer acts as an ATP-dependent pump, pulling dsDNA into and through the RuvAB complex. RuvB forms 2 homohexamers on either side of HJ DNA bound by 1 or 2 RuvA tetramers; 4 subunits per hexamer contact DNA at a time. Coordinated motions by a converter formed by DNA-disengaged RuvB subunits stimulates ATP hydrolysis and nucleotide exchange. Immobilization of the converter enables RuvB to convert the ATP-contained energy into a lever motion, pulling 2 nucleotides of DNA out of the RuvA tetramer per ATP hydrolyzed, thus driving DNA branch migration. The RuvB motors rotate together with the DNA substrate, which together with the progressing nucleotide cycle form the mechanistic basis for DNA recombination by continuous HJ branch migration. Branch migration allows RuvC to scan DNA until it finds its consensus sequence, where it cleaves and resolves cruciform DNA. The chain is Holliday junction branch migration complex subunit RuvB from Lactobacillus johnsonii (strain CNCM I-12250 / La1 / NCC 533).